The following is a 306-amino-acid chain: Agmatinase (306 aa).

6 residues coordinate Mn(2+): His-126, Asp-149, His-151, Asp-153, Asp-230, and Asp-232.

It belongs to the arginase family. Agmatinase subfamily. Requires Mn(2+) as cofactor.

The catalysed reaction is agmatine + H2O = urea + putrescine. The protein operates within amine and polyamine biosynthesis; putrescine biosynthesis via agmatine pathway; putrescine from agmatine: step 1/1. Catalyzes the formation of putrescine from agmatine. The sequence is that of Agmatinase from Escherichia coli (strain SE11).